A 148-amino-acid chain; its full sequence is Large ribosomal subunit protein bL9 (148 aa).

The protein belongs to the bacterial ribosomal protein bL9 family.

Its function is as follows. Binds to the 23S rRNA. The polypeptide is Large ribosomal subunit protein bL9 (Bacillus thuringiensis subsp. konkukian (strain 97-27)).